The chain runs to 203 residues: Imidazole glycerol phosphate synthase subunit HisH (203 aa).

The region spanning 1–203 is the Glutamine amidotransferase type-1 domain; the sequence is MIGIIDYGMG…KNFGEMIKCL (203 aa). Residue C79 is the Nucleophile of the active site. Catalysis depends on residues H181 and E183.

As to quaternary structure, heterodimer of HisH and HisF.

The protein localises to the cytoplasm. It carries out the reaction 5-[(5-phospho-1-deoxy-D-ribulos-1-ylimino)methylamino]-1-(5-phospho-beta-D-ribosyl)imidazole-4-carboxamide + L-glutamine = D-erythro-1-(imidazol-4-yl)glycerol 3-phosphate + 5-amino-1-(5-phospho-beta-D-ribosyl)imidazole-4-carboxamide + L-glutamate + H(+). It catalyses the reaction L-glutamine + H2O = L-glutamate + NH4(+). Its pathway is amino-acid biosynthesis; L-histidine biosynthesis; L-histidine from 5-phospho-alpha-D-ribose 1-diphosphate: step 5/9. IGPS catalyzes the conversion of PRFAR and glutamine to IGP, AICAR and glutamate. The HisH subunit catalyzes the hydrolysis of glutamine to glutamate and ammonia as part of the synthesis of IGP and AICAR. The resulting ammonia molecule is channeled to the active site of HisF. This is Imidazole glycerol phosphate synthase subunit HisH from Caldanaerobacter subterraneus subsp. tengcongensis (strain DSM 15242 / JCM 11007 / NBRC 100824 / MB4) (Thermoanaerobacter tengcongensis).